The following is a 692-amino-acid chain: Glycine--tRNA ligase beta subunit (692 aa).

Belongs to the class-II aminoacyl-tRNA synthetase family. As to quaternary structure, tetramer of two alpha and two beta subunits.

It localises to the cytoplasm. The enzyme catalyses tRNA(Gly) + glycine + ATP = glycyl-tRNA(Gly) + AMP + diphosphate. The polypeptide is Glycine--tRNA ligase beta subunit (Pseudoalteromonas atlantica (strain T6c / ATCC BAA-1087)).